Reading from the N-terminus, the 496-residue chain is Probable uroporphyrinogen-III C-methyltransferase (496 aa).

The protein belongs to the precorrin methyltransferase family.

It carries out the reaction uroporphyrinogen III + 2 S-adenosyl-L-methionine = precorrin-2 + 2 S-adenosyl-L-homocysteine + H(+). In terms of biological role, siroheme synthase involved in methionine biosynthesis. This is Probable uroporphyrinogen-III C-methyltransferase from Schizosaccharomyces pombe (strain 972 / ATCC 24843) (Fission yeast).